The sequence spans 876 residues: Vacuolar protein sorting-associated protein 39 homolog (876 aa).

The 297-residue stretch at 14–310 (GVQIESIAAY…KFLVHADKGT (297 aa)) folds into the CNH domain. The stretch at 578-741 (ELIEVESLPR…ILIPPTQPLY (164 aa)) is one CHCR repeat.

This sequence belongs to the VAM6/VPS39 family. As to quaternary structure, part of the homotypic fusion and vacuole protein sorting (HOPS) complex, composed of Vps16A, car/Vps33A, dor/Vps18, Vps39, Vps11 and lt/Vps41. Interacts with Rab2 (GTP-bound form); the interaction is probably direct.

It is found in the cytoplasm. The protein localises to the lysosome membrane. It localises to the late endosome membrane. Its subcellular location is the late endosome. The protein resides in the lysosome. Functionally, part of the homotypic fusion and vacuole protein sorting (HOPS) tethering complex involved in endo-lysosomal vesicle trafficking and lysosome biogenesis. The HOPS complex facilitates docking and fusion of lysosomes with late endosomes and several other types of vesicles. The HOPS complex is also involved in autophagy and crinophagy (the elimination of unused secretory granules through their fusion with lysosomes). The HOPS complex mediates autophagocitic flux, probably by binding autophagosome-associated Syx17/syntaxin 17, promoting assembly of the trans-SNARE complex and instigating autophagosome-lysosome fusion. Independent of Syx17/syntaxin 17, HOPS is involved in biosynthetic transport to lysosomes and lysosome-related organelles such as eye-pigment granules. Required for autophagocytosis-dependent remodeling of myofibrils and transverse-tubules (T-tubules) during metamorphosis. The chain is Vacuolar protein sorting-associated protein 39 homolog from Drosophila melanogaster (Fruit fly).